A 358-amino-acid polypeptide reads, in one-letter code: Cilia- and flagella-associated protein 263 (358 aa).

Coiled-coil stretches lie at residues 93 to 138 (YKKM…FKRN), 176 to 200 (RKNSALLTHKKKQQAQLRQQEEMAE), and 266 to 343 (RTKL…YTKS).

The protein belongs to the CFAP263 family. In terms of assembly, forms a complex with CFAP184; the interaction is required for functional activity in cilia. Interacts with HAP1 and PCM1.

The protein localises to the cytoplasm. Its subcellular location is the cytoskeleton. It localises to the microtubule organizing center. The protein resides in the centrosome. It is found in the centriolar satellite. The protein localises to the cell projection. Its subcellular location is the cilium. Component of centriolar satellites contributing to primary cilium formation. In complex with CFAP263, acts as a regulator of ciliary beating that connects radial spoke 3 (RS3) to the inner dynein arm (IDA) and the nexin-dynein regulatory complex (N-DRC). The complex is positioned parallel to N-DRC and forms a connection between the arch at the base of RS3, the IDA tail and N-DRC. This Danio rerio (Zebrafish) protein is Cilia- and flagella-associated protein 263 (cfap263).